The primary structure comprises 67 residues: Probable Sec-independent protein translocase protein TatE (67 aa).

A helical transmembrane segment spans residues 4 to 21; it reads ISITKLLVVAALIVLVFG. Residues 43–67 are disordered; sequence MNDDDTSVKKSAEEDVPADKISHKE.

It belongs to the TatA/E family. TatE subfamily.

It localises to the cell inner membrane. Functionally, part of the twin-arginine translocation (Tat) system that transports large folded proteins containing a characteristic twin-arginine motif in their signal peptide across membranes. TatE shares overlapping functions with TatA. The chain is Probable Sec-independent protein translocase protein TatE from Enterobacter lignolyticus (strain SCF1).